A 178-amino-acid polypeptide reads, in one-letter code: Thymidine kinase (178 aa).

13–20 contacts ATP; it reads GPMFAGKS. The Proton acceptor role is filled by Glu85. Position 115 (Phe115) interacts with substrate. Residues Cys140 and Cys143 each coordinate Zn(2+). 159-163 is a substrate binding site; the sequence is IEIIG. Residues Cys172 and Cys175 each coordinate Zn(2+).

This sequence belongs to the thymidine kinase family.

It catalyses the reaction thymidine + ATP = dTMP + ADP + H(+). The protein is Thymidine kinase (TK) of Myxoma virus (strain Lausanne) (MYXV).